The following is a 462-amino-acid chain: Exodeoxyribonuclease 7 large subunit (462 aa).

It belongs to the XseA family. As to quaternary structure, heterooligomer composed of large and small subunits.

Its subcellular location is the cytoplasm. The catalysed reaction is Exonucleolytic cleavage in either 5'- to 3'- or 3'- to 5'-direction to yield nucleoside 5'-phosphates.. Bidirectionally degrades single-stranded DNA into large acid-insoluble oligonucleotides, which are then degraded further into small acid-soluble oligonucleotides. The protein is Exodeoxyribonuclease 7 large subunit of Pectobacterium carotovorum subsp. carotovorum (strain PC1).